Consider the following 173-residue polypeptide: Ribosome maturation factor RimM (173 aa).

The 75-residue stretch at 95–169 (EGSYYFKDIL…RIEVTLLEGL (75 aa)) folds into the PRC barrel domain.

The protein belongs to the RimM family. Binds ribosomal protein uS19.

Its subcellular location is the cytoplasm. Its function is as follows. An accessory protein needed during the final step in the assembly of 30S ribosomal subunit, possibly for assembly of the head region. Essential for efficient processing of 16S rRNA. May be needed both before and after RbfA during the maturation of 16S rRNA. It has affinity for free ribosomal 30S subunits but not for 70S ribosomes. The protein is Ribosome maturation factor RimM of Lactobacillus johnsonii (strain CNCM I-12250 / La1 / NCC 533).